We begin with the raw amino-acid sequence, 441 residues long: Xaa-Pro dipeptidase (441 aa).

Mn(2+) contacts are provided by Asp244, Asp255, His336, Glu381, and Glu420.

This sequence belongs to the peptidase M24B family. Bacterial-type prolidase subfamily. The cofactor is Mn(2+).

The enzyme catalyses Xaa-L-Pro dipeptide + H2O = an L-alpha-amino acid + L-proline. Splits dipeptides with a prolyl residue in the C-terminal position. In Xanthomonas oryzae pv. oryzae (strain MAFF 311018), this protein is Xaa-Pro dipeptidase.